The sequence spans 169 residues: S-ribosylhomocysteine lyase (169 aa).

3 residues coordinate Fe cation: His-54, His-58, and Cys-128.

It belongs to the LuxS family. In terms of assembly, homodimer. It depends on Fe cation as a cofactor.

The enzyme catalyses S-(5-deoxy-D-ribos-5-yl)-L-homocysteine = (S)-4,5-dihydroxypentane-2,3-dione + L-homocysteine. In terms of biological role, involved in the synthesis of autoinducer 2 (AI-2) which is secreted by bacteria and is used to communicate both the cell density and the metabolic potential of the environment. The regulation of gene expression in response to changes in cell density is called quorum sensing. Catalyzes the transformation of S-ribosylhomocysteine (RHC) to homocysteine (HC) and 4,5-dihydroxy-2,3-pentadione (DPD). This chain is S-ribosylhomocysteine lyase, found in Shewanella sp. (strain ANA-3).